Here is a 205-residue protein sequence, read N- to C-terminus: MDIEKTGSRREEEEPIVQKPKLEKGKGKAHVFAPPMNYSRIMEKHKQEKVSMAGWKRGVAIFDFVLRLIAAITAMAAAAKMATTEETLPFFTQFLQFSADYTDLPTLSSFVIVNSIVGGYLTLSLPFSIVCILRPLAVPPRLFLILCDTAMMGLTMVAASASAAIVYLAHNGNSSSNWLPVCQQFGDFCKERVAPWWLPLLQRLF.

At 1-58 (MDIEKTGSRREEEEPIVQKPKLEKGKGKAHVFAPPMNYSRIMEKHKQEKVSMAGWKRG) the chain is on the cytoplasmic side. A helical membrane pass occupies residues 59–79 (VAIFDFVLRLIAAITAMAAAA). Residues 80-109 (KMATTEETLPFFTQFLQFSADYTDLPTLSS) are Extracellular-facing. A helical transmembrane segment spans residues 110-130 (FVIVNSIVGGYLTLSLPFSIV). The Cytoplasmic segment spans residues 131-148 (CILRPLAVPPRLFLILCD). Residues 149 to 169 (TAMMGLTMVAASASAAIVYLA) form a helical membrane-spanning segment. The Extracellular segment spans residues 170–205 (HNGNSSSNWLPVCQQFGDFCKERVAPWWLPLLQRLF). N-linked (GlcNAc...) asparagine glycosylation occurs at Asn173.

It belongs to the Casparian strip membrane proteins (CASP) family. As to quaternary structure, homodimer and heterodimers.

Its subcellular location is the cell membrane. Regulates membrane-cell wall junctions and localized cell wall deposition. Required for establishment of the Casparian strip membrane domain (CSD) and the subsequent formation of Casparian strips, a cell wall modification of the root endodermis that determines an apoplastic barrier between the intraorganismal apoplasm and the extraorganismal apoplasm and prevents lateral diffusion. The protein is Casparian strip membrane protein 4 of Raphanus sativus (Radish).